Reading from the N-terminus, the 222-residue chain is von Willebrand factor C domain-containing protein 2-like (222 aa).

Positions 1–21 (MALHIHEACILLLVIPGLVTS) are cleaved as a signal peptide. VWFC domains follow at residues 51-110 (KGCV…PECK) and 114-172 (NFCE…PVCK).

Peripherally associated with AMPAR complex. AMPAR complex consists of an inner core made of 4 pore-forming GluA/GRIA proteins (GRIA1, GRIA2, GRIA3 and GRIA4) and 4 major auxiliary subunits arranged in a twofold symmetry. One of the two pairs of distinct binding sites is occupied either by CNIH2, CNIH3 or CACNG2, CACNG3. The other harbors CACNG2, CACNG3, CACNG4, CACNG8 or GSG1L. This inner core of AMPAR complex is complemented by outer core constituents binding directly to the GluA/GRIA proteins at sites distinct from the interaction sites of the inner core constituents. Outer core constituents include at least PRRT1, PRRT2, CKAMP44/SHISA9, FRRS1L and NRN1. The proteins of the inner and outer core serve as a platform for other, more peripherally associated AMPAR constituents, including VWC2L. Alone or in combination, these auxiliary subunits control the gating and pharmacology of the AMPAR complex and profoundly impact their biogenesis and protein processing. Predominantly expressed in the brain (at protein level). Also detected in bones, including femur and calvaria, heart, lung and kidney. Isoform 5 is predominant in lung and heart, compared to isoforms 1 and 3. Isoform 4 is expressed in femur and calvaria at higher levels than isoforms 1 and 5. Isoforms 1 and 4 are expressed at higher levels than isoform 5 in kidney and brain.

The protein resides in the secreted. Its subcellular location is the synapse. In terms of biological role, may play a role in neurogenesis. May promote matrix mineralization, but has been shown to weakly, but significantly inhibit BMP2 and BMP6 activity in a preosteoblastic cell line. The chain is von Willebrand factor C domain-containing protein 2-like (Vwc2l) from Mus musculus (Mouse).